Here is a 531-residue protein sequence, read N- to C-terminus: SWI/SNF-related matrix-associated actin-dependent regulator of chromatin subfamily D member 2 (531 aa).

An asymmetric dimethylarginine mark is found at Arg81 and Arg104. Ser203 is subject to Phosphoserine. The segment at 205–227 (SKAEGDTAGTTGTPGGTPAGDKV) is disordered. Phosphothreonine is present on Thr217. Residue Lys226 forms a Glycyl lysine isopeptide (Lys-Gly) (interchain with G-Cter in SUMO2) linkage. The 78-residue stretch at 306–383 (HQPPQYKLDP…PMKLAGLLQH (78 aa)) folds into the SWIB/MDM2 domain.

It belongs to the SMARCD family. In terms of assembly, component of the multiprotein chromatin-remodeling complexes SWI/SNF: SWI/SNF-A (BAF), SWI/SNF-B (PBAF) and related complexes. The canonical complex contains a catalytic subunit (either SMARCA4/BRG1/BAF190A or SMARCA2/BRM/BAF190B), and at least SMARCE1, ACTL6A/BAF53, SMARCC1/BAF155, SMARCC2/BAF170, and SMARCB1/SNF5/BAF47. Other subunits specific to each of the complexes may also be present permitting several possible combinations developmentally and tissue specific. Component of the BAF complex, which includes at least actin (ACTB), ARID1A/BAF250A, ARID1B/BAF250B, SMARCA2/BRM, SMARCA4/BRG1, ACTL6A/BAF53, ACTL6B/BAF53B, SMARCE1/BAF57, SMARCC1/BAF155, SMARCC2/BAF170, SMARCB1/SNF5/INI1, and one or more SMARCD1/BAF60A, SMARCD2/BAF60B, or SMARCD3/BAF60C. In muscle cells, the BAF complex also contains DPF3. Component of the SWI/SNF-B (PBAF) chromatin remodeling complex, at least composed of SMARCA4/BRG1, SMARCB1/BAF47/SNF5, ACTL6A/BAF53A or ACTL6B/BAF53B, SMARCE1/BAF57, SMARCD1/BAF60A, SMARCD2/BAF60B, perhaps SMARCD3/BAF60C, SMARCC1/BAF155, SMARCC2/BAF170, PBRM1/BAF180, ARID2/BAF200 and actin (ACTB). Interacts with UNKL. Interacts with CEBPE. Ubiquitinated through a signaling process involving RAC1 and the RING finger protein UNKL.

Its subcellular location is the nucleus. In terms of biological role, involved in transcriptional activation and repression of select genes by chromatin remodeling (alteration of DNA-nucleosome topology). Component of SWI/SNF chromatin remodeling complexes that carry out key enzymatic activities, changing chromatin structure by altering DNA-histone contacts within a nucleosome in an ATP-dependent manner. Critical regulator of myeloid differentiation, controlling granulocytopoiesis and the expression of genes involved in neutrophil granule formation. The chain is SWI/SNF-related matrix-associated actin-dependent regulator of chromatin subfamily D member 2 (SMARCD2) from Bos taurus (Bovine).